A 65-amino-acid chain; its full sequence is Large ribosomal subunit protein bL35 (65 aa).

It belongs to the bacterial ribosomal protein bL35 family.

This Nitrosomonas eutropha (strain DSM 101675 / C91 / Nm57) protein is Large ribosomal subunit protein bL35.